A 156-amino-acid chain; its full sequence is Small ribosomal subunit protein uS7 (156 aa).

The protein belongs to the universal ribosomal protein uS7 family. As to quaternary structure, part of the 30S ribosomal subunit. Contacts proteins S9 and S11.

In terms of biological role, one of the primary rRNA binding proteins, it binds directly to 16S rRNA where it nucleates assembly of the head domain of the 30S subunit. Is located at the subunit interface close to the decoding center, probably blocks exit of the E-site tRNA. The polypeptide is Small ribosomal subunit protein uS7 (Shewanella halifaxensis (strain HAW-EB4)).